A 326-amino-acid polypeptide reads, in one-letter code: D-amino-acid oxidase (326 aa).

FAD-binding residues include glycine 18, valine 19, threonine 46, threonine 47, serine 48, alanine 52, alanine 53, valine 162, and serine 179. Residues tyrosine 222 and arginine 277 each coordinate D-proline. D-serine contacts are provided by tyrosine 222 and arginine 277. Residues arginine 277, glycine 303, glycine 304, glycine 306, and threonine 308 each coordinate FAD. Glycine 304 contributes to the D-proline binding site. Residue glycine 304 coordinates D-serine.

The protein belongs to the DAMOX/DASOX family. In terms of assembly, monomer. FAD serves as cofactor.

It is found in the cytoplasm. Its subcellular location is the secreted. It localises to the cell wall. The catalysed reaction is a D-alpha-amino acid + O2 + H2O = a 2-oxocarboxylate + H2O2 + NH4(+). It catalyses the reaction D-valine + O2 + H2O = 3-methyl-2-oxobutanoate + H2O2 + NH4(+). It carries out the reaction D-leucine + O2 + H2O = 4-methyl-2-oxopentanoate + H2O2 + NH4(+). The enzyme catalyses D-isoleucine + O2 + H2O = (R)-3-methyl-2-oxopentanoate + H2O2 + NH4(+). The catalysed reaction is D-tyrosine + O2 + H2O = 3-(4-hydroxyphenyl)pyruvate + H2O2 + NH4(+). It catalyses the reaction D-threonine + O2 + H2O = (S)-3-hydroxy-2-oxobutanoate + H2O2 + NH4(+). With respect to regulation, inhibited by benzoate and phenylmethylsulfonyl fluoride (PMSF). Weakly inhibited by anthranilate, crotonate, and the amino acid-modifying agents dithionitrobenzoic acid and diethyl pyrocarbonate. Not inhibited by malonate, meso-tartrate, D-malate, or the amino acid-modifying agents iodoacetic acid or butane-2,3-dione. In terms of biological role, catalyzes the oxidative deamination of D-amino acids with broad substrate specificity. The polypeptide is D-amino-acid oxidase (Rubrobacter xylanophilus (strain DSM 9941 / JCM 11954 / NBRC 16129 / PRD-1)).